The chain runs to 152 residues: Probable ribose-5-phosphate isomerase B (152 aa).

12–13 (DH) contacts D-ribulose 5-phosphate. Cysteine 70 serves as the catalytic Proton acceptor. Residue 71 to 75 (GTGVG) coordinates D-ribulose 5-phosphate. Catalysis depends on histidine 103, which acts as the Proton donor. Positions 104, 114, 137, and 141 each coordinate D-ribulose 5-phosphate.

It belongs to the LacAB/RpiB family. In terms of assembly, homodimer.

The catalysed reaction is aldehydo-D-ribose 5-phosphate = D-ribulose 5-phosphate. It functions in the pathway carbohydrate degradation; pentose phosphate pathway; D-ribose 5-phosphate from D-ribulose 5-phosphate (non-oxidative stage): step 1/1. Catalyzes the interconversion of ribulose-5-P and ribose-5-P. The polypeptide is Probable ribose-5-phosphate isomerase B (Mycoplasma pneumoniae (strain ATCC 29342 / M129 / Subtype 1) (Mycoplasmoides pneumoniae)).